Here is a 110-residue protein sequence, read N- to C-terminus: Snake venom vascular endothelial growth factor toxin (110 aa).

Q1 bears the Pyrrolidone carboxylic acid mark. Intrachain disulfides connect C14/C56, C45/C91, and C49/C93.

The protein belongs to the PDGF/VEGF growth factor family. Snake venom VEGF subfamily. In terms of assembly, homodimer; disulfide-linked. As to expression, expressed by the venom gland.

The protein localises to the secreted. Functionally, snake venom VEGFs that may contribute to venom dispersion and prey subjugation by inducing vascular permeability and hypotension. This protein potently stimulates dermal human microvascular endothelial cell (dHMVEC) proliferation in a VEGFR-2 dependent manner. This stimulatory effect is correlated with activation of the MAPK Erk1/2 signaling pathway. It also appears to be a chemoattractant for migration of these cells and stimulates their radial migration in a collagen gel. In vivo, it induces angiogenesis in a Japanese quail assay. This pro-angiogenic effect may also be related to its interaction with VEGFR-2. In addition, it may induce an increase in capillary permeability after intradermal injection, as well as a drastic hypotensive effect after intravenous injection. The hypotension is mediated by nitric oxide (NO), which is produced by VEGF-activated endothelium NO synthase. The protein is Snake venom vascular endothelial growth factor toxin of Daboia palaestinae (Palestine viper).